We begin with the raw amino-acid sequence, 418 residues long: Homocitrate synthase, mitochondrial (418 aa).

Over residues 1–10 (MSVSEANGTE) the composition is skewed to polar residues. The interval 1–25 (MSVSEANGTETIKPPMNGNPYGPNP) is disordered. A compositionally biased stretch (low complexity) spans 14-25 (PPMNGNPYGPNP). The Pyruvate carboxyltransferase domain occupies 35–288 (FSIIESTLRE…THKYKLNQLR (254 aa)). Positions 43, 44, and 103 each coordinate 2-oxoglutarate. Glu-44 is an L-lysine binding site. Residue Glu-44 participates in Zn(2+) binding. Asp-123 is a binding site for L-lysine. 2-oxoglutarate is bound by residues Arg-163, Ser-165, Thr-197, His-224, and His-226. Thr-197 is an L-lysine binding site. Zn(2+)-binding residues include His-224 and His-226. The active-site Proton acceptor is His-321.

This sequence belongs to the alpha-IPM synthase/homocitrate synthase family. Homocitrate synthase LYS20/LYS21 subfamily. It depends on Mg(2+) as a cofactor. Mn(2+) is required as a cofactor. Requires Zn(2+) as cofactor. The cofactor is Co(2+).

It localises to the mitochondrion. It carries out the reaction acetyl-CoA + 2-oxoglutarate + H2O = (2R)-homocitrate + CoA + H(+). It participates in amino-acid biosynthesis; L-lysine biosynthesis via AAA pathway; L-alpha-aminoadipate from 2-oxoglutarate: step 1/5. Its activity is regulated as follows. The activity is controled by feedback inhibition by L-lysine, the final product of the pathway that acts as a competitive inhibitor of 2-oxoglutarate. Its function is as follows. Catalyzes the aldol-type condensation of 2-oxoglutarate with acetyl-CoA to yield homocitrate, the first step of the alpha-aminoadipate (AAA) lysine biosynthesis pathway. This Schizosaccharomyces pombe (strain 972 / ATCC 24843) (Fission yeast) protein is Homocitrate synthase, mitochondrial.